Here is a 350-residue protein sequence, read N- to C-terminus: Dihydroorotase (350 aa).

Positions 17 and 19 each coordinate Zn(2+). Residues 19–21 and N45 contribute to the substrate site; that span reads HLR. 3 residues coordinate Zn(2+): K103, H140, and H178. K103 carries the N6-carboxylysine modification. Residue H140 coordinates substrate. Residue L223 participates in substrate binding. D251 contacts Zn(2+). The active site involves D251. Substrate-binding residues include H255 and A267.

It belongs to the metallo-dependent hydrolases superfamily. DHOase family. Class II DHOase subfamily. As to quaternary structure, homodimer. Zn(2+) is required as a cofactor.

The enzyme catalyses (S)-dihydroorotate + H2O = N-carbamoyl-L-aspartate + H(+). It participates in pyrimidine metabolism; UMP biosynthesis via de novo pathway; (S)-dihydroorotate from bicarbonate: step 3/3. Its function is as follows. Catalyzes the reversible cyclization of carbamoyl aspartate to dihydroorotate. This Erwinia tasmaniensis (strain DSM 17950 / CFBP 7177 / CIP 109463 / NCPPB 4357 / Et1/99) protein is Dihydroorotase.